Here is an 80-residue protein sequence, read N- to C-terminus: ATP synthase subunit c (80 aa).

Transmembrane regions (helical) follow at residues I11–L31 and F54–I74.

This sequence belongs to the ATPase C chain family. As to quaternary structure, F-type ATPases have 2 components, F(1) - the catalytic core - and F(0) - the membrane proton channel. F(1) has five subunits: alpha(3), beta(3), gamma(1), delta(1), epsilon(1). F(0) has three main subunits: a(1), b(2) and c(10-14). The alpha and beta chains form an alternating ring which encloses part of the gamma chain. F(1) is attached to F(0) by a central stalk formed by the gamma and epsilon chains, while a peripheral stalk is formed by the delta and b chains.

It is found in the cell membrane. Its function is as follows. F(1)F(0) ATP synthase produces ATP from ADP in the presence of a proton or sodium gradient. F-type ATPases consist of two structural domains, F(1) containing the extramembraneous catalytic core and F(0) containing the membrane proton channel, linked together by a central stalk and a peripheral stalk. During catalysis, ATP synthesis in the catalytic domain of F(1) is coupled via a rotary mechanism of the central stalk subunits to proton translocation. In terms of biological role, key component of the F(0) channel; it plays a direct role in translocation across the membrane. A homomeric c-ring of between 10-14 subunits forms the central stalk rotor element with the F(1) delta and epsilon subunits. The chain is ATP synthase subunit c from Baumannia cicadellinicola subsp. Homalodisca coagulata.